Reading from the N-terminus, the 677-residue chain is Methionine--tRNA ligase (677 aa).

Positions 15–25 (PYANGSIHLGH) match the 'HIGH' region motif. The Zn(2+) site is built by Cys146, Cys149, Cys159, and Cys162. Positions 333 to 337 (KMSKS) match the 'KMSKS' region motif. Lys336 lines the ATP pocket. Residues 575–677 (DFAKVDLRVA…DGAKPGQQVK (103 aa)) enclose the tRNA-binding domain.

Belongs to the class-I aminoacyl-tRNA synthetase family. MetG type 1 subfamily. In terms of assembly, homodimer. Zn(2+) serves as cofactor.

It localises to the cytoplasm. The enzyme catalyses tRNA(Met) + L-methionine + ATP = L-methionyl-tRNA(Met) + AMP + diphosphate. Functionally, is required not only for elongation of protein synthesis but also for the initiation of all mRNA translation through initiator tRNA(fMet) aminoacylation. The sequence is that of Methionine--tRNA ligase from Salmonella arizonae (strain ATCC BAA-731 / CDC346-86 / RSK2980).